The primary structure comprises 178 residues: Small ribosomal subunit protein uS5 (178 aa).

Positions 15-78 constitute an S5 DRBM domain; the sequence is FEEKIIEIRR…SAAKRNIVEV (64 aa).

The protein belongs to the universal ribosomal protein uS5 family. As to quaternary structure, part of the 30S ribosomal subunit. Contacts proteins S4 and S8.

With S4 and S12 plays an important role in translational accuracy. Functionally, located at the back of the 30S subunit body where it stabilizes the conformation of the head with respect to the body. This is Small ribosomal subunit protein uS5 from Thermotoga maritima (strain ATCC 43589 / DSM 3109 / JCM 10099 / NBRC 100826 / MSB8).